A 436-amino-acid polypeptide reads, in one-letter code: 3-ketoacyl-CoA thiolase (436 aa).

C99 acts as the Acyl-thioester intermediate in catalysis. Residues H392 and C422 each act as proton acceptor in the active site.

It belongs to the thiolase-like superfamily. Thiolase family. In terms of assembly, heterotetramer of two alpha chains (FadJ) and two beta chains (FadI).

It localises to the cytoplasm. It carries out the reaction an acyl-CoA + acetyl-CoA = a 3-oxoacyl-CoA + CoA. It functions in the pathway lipid metabolism; fatty acid beta-oxidation. Its function is as follows. Catalyzes the final step of fatty acid oxidation in which acetyl-CoA is released and the CoA ester of a fatty acid two carbons shorter is formed. The polypeptide is 3-ketoacyl-CoA thiolase (Shewanella sp. (strain W3-18-1)).